The following is a 482-amino-acid chain: ATP synthase subunit beta (482 aa).

G162 to T169 contributes to the ATP binding site.

This sequence belongs to the ATPase alpha/beta chains family. As to quaternary structure, F-type ATPases have 2 components, CF(1) - the catalytic core - and CF(0) - the membrane proton channel. CF(1) has five subunits: alpha(3), beta(3), gamma(1), delta(1), epsilon(1). CF(0) has four main subunits: a(1), b(1), b'(1) and c(9-12).

The protein localises to the cellular thylakoid membrane. The catalysed reaction is ATP + H2O + 4 H(+)(in) = ADP + phosphate + 5 H(+)(out). Functionally, produces ATP from ADP in the presence of a proton gradient across the membrane. The catalytic sites are hosted primarily by the beta subunits. This is ATP synthase subunit beta from Synechococcus sp. (strain PCC 6716).